Reading from the N-terminus, the 111-residue chain is Large ribosomal subunit protein eL30 (111 aa).

Belongs to the eukaryotic ribosomal protein eL30 family.

This chain is Large ribosomal subunit protein eL30 (RPL30), found in Oryza sativa subsp. japonica (Rice).